A 336-amino-acid polypeptide reads, in one-letter code: Large ribosomal subunit protein uL10 (336 aa).

The tract at residues 305–336 (AVVATEEAPKAETKKEEKKEEAAPAAGLGLLF) is disordered. Over residues 311-326 (EAPKAETKKEEKKEEA) the composition is skewed to basic and acidic residues.

This sequence belongs to the universal ribosomal protein uL10 family. Part of the 50S ribosomal subunit. Forms part of the ribosomal stalk which helps the ribosome interact with GTP-bound translation factors. Forms a heptameric L10(L12)2(L12)2(L12)2 complex, where L10 forms an elongated spine to which the L12 dimers bind in a sequential fashion.

In terms of biological role, forms part of the ribosomal stalk, playing a central role in the interaction of the ribosome with GTP-bound translation factors. The sequence is that of Large ribosomal subunit protein uL10 from Methanococcus vannielii (strain ATCC 35089 / DSM 1224 / JCM 13029 / OCM 148 / SB).